We begin with the raw amino-acid sequence, 414 residues long: Acyltransferase MYCGRDRAFT_85486 (414 aa).

A compositionally biased stretch (polar residues) spans 16-25; that stretch reads DGTSTVTIRP. A disordered region spans residues 16–47; the sequence is DGTSTVTIRPTQKAAPSEEPSQDTAPSKKDSN. A substrate-binding site is contributed by histidine 329. Glutamate 367 functions as the Proton acceptor in the catalytic mechanism.

Belongs to the lysine N-acyltransferase mbtK family.

It participates in siderophore biosynthesis. Its function is as follows. Acyltransferase; part of the gene cluster 14 that mediates the biosynthesis of a ferrichrome A-like siderophore which may contribute to organismal virulence. The first step of siderophore biosynthesis is performed by the HMG-CoA synthase (HMGS) MYCGRDRAFT_54740 which catalyzes the generation of HMG-CoA and CoA using acetoacetyl-CoA and acetyl-CoA as substrates. The enoyl-CoA isomerase/hydratase MYCGRDRAFT_76805 then catalyzes the conversion of HMG-CoA to methylglutaconyl-CoA. The acyltransferase MYCGRDRAFT_85486 then fuses methylglutaconyl-CoA with hydroxyornithine to yield methylglutaconyl hydroxyornithine. Methylglutaconyl hydroxyornithine is then available for use by the nonribosomal peptide synthetase NRPS2 to generate the ferrichrome A-like siderophore. This chain is Acyltransferase MYCGRDRAFT_85486, found in Zymoseptoria tritici (strain CBS 115943 / IPO323) (Speckled leaf blotch fungus).